We begin with the raw amino-acid sequence, 534 residues long: CTP synthase (534 aa).

The tract at residues 1-267 is amidoligase domain; the sequence is MTKYIFVTGG…DQIVCDHLKL (267 aa). Ser-13 serves as a coordination point for CTP. A UTP-binding site is contributed by Ser-13. Residue 14 to 19 coordinates ATP; that stretch reads SIGKGI. Residue Tyr-54 participates in L-glutamine binding. Asp-71 contacts ATP. The Mg(2+) site is built by Asp-71 and Glu-141. CTP-binding positions include 148–150, 188–193, and Lys-224; these read DIE and KTKPTQ. UTP contacts are provided by residues 188–193 and Lys-224; that span reads KTKPTQ. Residues 292 to 534 enclose the Glutamine amidotransferase type-1 domain; it reads KIALVGKYVE…FVTAAVENMK (243 aa). Gly-354 lines the L-glutamine pocket. Cys-381 functions as the Nucleophile; for glutamine hydrolysis in the catalytic mechanism. Residues 382 to 385, Glu-405, and Arg-463 contribute to the L-glutamine site; that span reads LGMQ. Residues His-508 and Glu-510 contribute to the active site.

The protein belongs to the CTP synthase family. In terms of assembly, homotetramer.

The catalysed reaction is UTP + L-glutamine + ATP + H2O = CTP + L-glutamate + ADP + phosphate + 2 H(+). It carries out the reaction L-glutamine + H2O = L-glutamate + NH4(+). It catalyses the reaction UTP + NH4(+) + ATP = CTP + ADP + phosphate + 2 H(+). Its pathway is pyrimidine metabolism; CTP biosynthesis via de novo pathway; CTP from UDP: step 2/2. With respect to regulation, allosterically activated by GTP, when glutamine is the substrate; GTP has no effect on the reaction when ammonia is the substrate. The allosteric effector GTP functions by stabilizing the protein conformation that binds the tetrahedral intermediate(s) formed during glutamine hydrolysis. Inhibited by the product CTP, via allosteric rather than competitive inhibition. In terms of biological role, catalyzes the ATP-dependent amination of UTP to CTP with either L-glutamine or ammonia as the source of nitrogen. Regulates intracellular CTP levels through interactions with the four ribonucleotide triphosphates. The protein is CTP synthase of Streptococcus agalactiae serotype Ia (strain ATCC 27591 / A909 / CDC SS700).